The primary structure comprises 400 residues: MNFLLCIFKGVYVIKLIQRFFKLESAGGILLLFSAVVAMLLANSPLSNQYNDFLNLPVSLQIGSFSINKTLIHWINDGFMAVFFVLVGMEVKKELFEGALSTYQQAIFPAIAAIGGMVIPAVVYWFIAKQDPSLANGWAIPMATDIAFALGIMALLSKQVPLPLKIFLLALAIIDDLGAIVVIALFFSHGLSVQALIFSAVAIIVLILLNRFKVSALCAYMVVGAILWASVLKSGVHATLAGVIIGFSIPLKGKKGERPLDDFEHILSSWSSFVILPLFAFANAGVSFAGIDVNMISSPLLLAIASGLIIGKPVGIFGFSYLSVKLGLAKLPDGINFKQIFAVAVLCGIGFTMSMFLASLAFDANAGESVNTLSRLGILLGSTVSAILGYLFLKQTTKLS.

Transmembrane regions (helical) follow at residues 26-46 (AGGILLLFSAVVAMLLANSPL), 71-91 (LIHWINDGFMAVFFVLVGMEV), 107-127 (IFPAIAAIGGMVIPAVVYWFI), 137-157 (GWAIPMATDIAFALGIMALLS), 166-186 (IFLLALAIIDDLGAIVVIALF), 189-209 (HGLSVQALIFSAVAIIVLILL), 212-232 (FKVSALCAYMVVGAILWASVL), 233-253 (KSGVHATLAGVIIGFSIPLKG), 273-293 (FVILPLFAFANAGVSFAGIDV), 299-319 (PLLLAIASGLIIGKPVGIFGF), 340-360 (IFAVAVLCGIGFTMSMFLASL), and 373-393 (LSRLGILLGSTVSAILGYLFL).

Belongs to the NhaA Na(+)/H(+) (TC 2.A.33) antiporter family.

It localises to the cell inner membrane. It catalyses the reaction Na(+)(in) + 2 H(+)(out) = Na(+)(out) + 2 H(+)(in). In terms of biological role, na(+)/H(+) antiporter that extrudes sodium in exchange for external protons. The chain is Na(+)/H(+) antiporter NhaA from Haemophilus influenzae (strain 86-028NP).